A 614-amino-acid chain; its full sequence is Zinc metalloproteinase-disintegrin-like HR1b (614 aa).

Positions Met1–Ser20 are cleaved as a signal peptide. Residues Ile21 to Glu191 constitute a propeptide that is removed on maturation. Gln192 carries the post-translational modification Pyrrolidone carboxylic acid. The 197-residue stretch at Arg198–Pro394 folds into the Peptidase M12B domain. An N-linked (GlcNAc...) asparagine glycan is attached at Asn264. 3 disulfide bridges follow: Cys309/Cys389, Cys349/Cys373, and Cys351/Cys356. His334 contacts Zn(2+). The active site involves Glu335. 2 residues coordinate Zn(2+): His338 and His344. An N-linked (GlcNAc...) asparagine glycan is attached at Asn372. A propeptide spanning residues Ser395–Asp398 is cleaved from the precursor. The 87-residue stretch at Pro402 to Asn488 folds into the Disintegrin domain. The Ca(2+) site is built by Val404, Asn407, Leu409, Glu411, Glu414, and Asp417. 22 cysteine pairs are disulfide-bonded: Cys405–Cys424, Cys405–Cys434, Cys416–Cys429, Cys416–Cys434, Cys418–Cys424, Cys428–Cys451, Cys442–Cys448, Cys447–Cys473, Cys460–Cys480, Cys467–Cys492, Cys467–Cys499, Cys492–Cys504, Cys499–Cys504, Cys511–Cys526, Cys511–Cys561, Cys526–Cys568, Cys539–Cys549, Cys549–Cys556, Cys556–Cys593, Cys561–Cys568, Cys587–Cys598, and Cys593–Cys598. Positions Glu466–Asp468 match the D/ECD-tripeptide motif. Residue Asn518 is glycosylated (N-linked (GlcNAc...) asparagine). The N-linked (GlcNAc...) asparagine glycan is linked to Asn571. The propeptide occupies Thr608–Ile614.

The protein belongs to the venom metalloproteinase (M12B) family. P-III subfamily. P-IIIb sub-subfamily. Monomer. Requires Zn(2+) as cofactor. Expressed by the venom gland.

It localises to the secreted. Zinc protease that induces hemorrhage. Has preference for Tyr, Leu, Arg, Met, and Phe at the P1 position, in descending order (in vitro). Shows equal preference for the sequences of Ala-Asp and Arg-Ile at the P3-P2 position with different enzyme cleavage sites across the P1 position: the N-terminus side for Ala-Asp and the C-terminus side for Arg-Ile. In terms of biological role, inhibits platelet aggregation induced by ADP, thrombin, platelet-activating factor and collagen. Acts by inhibiting fibrinogen interaction with platelet receptors alpha-IIb/beta-3 (ITGA2B/ITGB3). The protein is Zinc metalloproteinase-disintegrin-like HR1b of Protobothrops flavoviridis (Habu).